Reading from the N-terminus, the 223-residue chain is Ribonuclease 3 (223 aa).

Residues 4–127 enclose the RNase III domain; sequence LNRLEEHLGY…LMGAIYLESG (124 aa). Glutamate 40 provides a ligand contact to Mg(2+). The active site involves aspartate 44. Mg(2+) is bound by residues aspartate 113 and glutamate 116. Residue glutamate 116 is part of the active site. The 70-residue stretch at 154 to 223 folds into the DRBM domain; sequence DYKTTLQEIT…AWKVLQGMNI (70 aa).

It belongs to the ribonuclease III family. As to quaternary structure, homodimer. Mg(2+) serves as cofactor.

The protein resides in the cytoplasm. It carries out the reaction Endonucleolytic cleavage to 5'-phosphomonoester.. Functionally, digests double-stranded RNA. Involved in the processing of primary rRNA transcript to yield the immediate precursors to the large and small rRNAs (23S and 16S). Processes some mRNAs, and tRNAs when they are encoded in the rRNA operon. Processes pre-crRNA and tracrRNA of type II CRISPR loci if present in the organism. The protein is Ribonuclease 3 of Campylobacter fetus subsp. fetus (strain 82-40).